Consider the following 472-residue polypeptide: Ribulose bisphosphate carboxylase large chain (472 aa).

2 residues coordinate substrate: Asn-120 and Thr-170. Lys-172 functions as the Proton acceptor in the catalytic mechanism. Lys-174 provides a ligand contact to substrate. 3 residues coordinate Mg(2+): Lys-198, Asp-200, and Glu-201. Lys-198 is subject to N6-carboxylysine. The active-site Proton acceptor is the His-291. Residues Arg-292, His-324, and Ser-376 each coordinate substrate.

Belongs to the RuBisCO large chain family. Type I subfamily. Heterohexadecamer of 8 large chains and 8 small chains. Mg(2+) serves as cofactor.

It is found in the carboxysome. The catalysed reaction is 2 (2R)-3-phosphoglycerate + 2 H(+) = D-ribulose 1,5-bisphosphate + CO2 + H2O. It catalyses the reaction D-ribulose 1,5-bisphosphate + O2 = 2-phosphoglycolate + (2R)-3-phosphoglycerate + 2 H(+). In terms of biological role, ruBisCO catalyzes two reactions: the carboxylation of D-ribulose 1,5-bisphosphate, the primary event in carbon dioxide fixation, as well as the oxidative fragmentation of the pentose substrate in the photorespiration process. Both reactions occur simultaneously and in competition at the same active site. This is Ribulose bisphosphate carboxylase large chain from Gloeothece citriformis (strain PCC 7424) (Cyanothece sp. (strain PCC 7424)).